The primary structure comprises 281 residues: TIP41-like protein (281 aa).

This sequence belongs to the TIP41 family.

This chain is TIP41-like protein, found in Caenorhabditis elegans.